A 254-amino-acid polypeptide reads, in one-letter code: Thiazole synthase (254 aa).

The Schiff-base intermediate with DXP role is filled by lysine 93. 1-deoxy-D-xylulose 5-phosphate contacts are provided by residues glycine 154, 181-182 (AG), and 203-204 (NT).

Belongs to the ThiG family. Homotetramer. Forms heterodimers with either ThiH or ThiS.

It is found in the cytoplasm. It carries out the reaction [ThiS sulfur-carrier protein]-C-terminal-Gly-aminoethanethioate + 2-iminoacetate + 1-deoxy-D-xylulose 5-phosphate = [ThiS sulfur-carrier protein]-C-terminal Gly-Gly + 2-[(2R,5Z)-2-carboxy-4-methylthiazol-5(2H)-ylidene]ethyl phosphate + 2 H2O + H(+). Its pathway is cofactor biosynthesis; thiamine diphosphate biosynthesis. Its function is as follows. Catalyzes the rearrangement of 1-deoxy-D-xylulose 5-phosphate (DXP) to produce the thiazole phosphate moiety of thiamine. Sulfur is provided by the thiocarboxylate moiety of the carrier protein ThiS. In vitro, sulfur can be provided by H(2)S. The chain is Thiazole synthase from Ruegeria pomeroyi (strain ATCC 700808 / DSM 15171 / DSS-3) (Silicibacter pomeroyi).